Reading from the N-terminus, the 236-residue chain is Phospholipid hydroperoxide glutathione peroxidase, chloroplastic (236 aa).

Residues 1-64 (MASMAFSTTF…SNFPIVPSKT (64 aa)) constitute a chloroplast transit peptide. Residue cysteine 111 is part of the active site.

This sequence belongs to the glutathione peroxidase family.

It is found in the plastid. Its subcellular location is the chloroplast stroma. The catalysed reaction is a hydroperoxy polyunsaturated fatty acid + 2 glutathione = a hydroxy polyunsaturated fatty acid + glutathione disulfide + H2O. Functionally, protects cells and enzymes from oxidative damage, by catalyzing the reduction of hydrogen peroxide, lipid peroxides and organic hydroperoxide, by glutathione. This is Phospholipid hydroperoxide glutathione peroxidase, chloroplastic from Pisum sativum (Garden pea).